A 184-amino-acid chain; its full sequence is Probable RNA 2'-phosphotransferase (184 aa).

Belongs to the KptA/TPT1 family.

Its function is as follows. Removes the 2'-phosphate from RNA via an intermediate in which the phosphate is ADP-ribosylated by NAD followed by a presumed transesterification to release the RNA and generate ADP-ribose 1''-2''-cyclic phosphate (APPR&gt;P). May function as an ADP-ribosylase. This is Probable RNA 2'-phosphotransferase from Shigella boydii serotype 18 (strain CDC 3083-94 / BS512).